The following is a 136-amino-acid chain: Gonadotropin subunit beta-2 (136 aa).

The N-terminal stretch at 1 to 21 is a signal peptide; the sequence is MVCLFLGASSFIWSLAPAAAA. Cystine bridges form between Cys27–Cys75, Cys41–Cys90, Cys44–Cys128, Cys52–Cys106, Cys56–Cys108, and Cys111–Cys118. Asn31 carries an N-linked (GlcNAc...) asparagine glycan.

The protein belongs to the glycoprotein hormones subunit beta family. As to quaternary structure, heterodimer of an alpha and a beta chain.

The protein localises to the secreted. Functionally, involved in gametogenesis and steroidogenesis. This Fundulus heteroclitus (Killifish) protein is Gonadotropin subunit beta-2 (cgbb).